The following is a 196-amino-acid chain: Imidazoleglycerol-phosphate dehydratase (196 aa).

The protein belongs to the imidazoleglycerol-phosphate dehydratase family.

It localises to the cytoplasm. It carries out the reaction D-erythro-1-(imidazol-4-yl)glycerol 3-phosphate = 3-(imidazol-4-yl)-2-oxopropyl phosphate + H2O. The protein operates within amino-acid biosynthesis; L-histidine biosynthesis; L-histidine from 5-phospho-alpha-D-ribose 1-diphosphate: step 6/9. This Granulibacter bethesdensis (strain ATCC BAA-1260 / CGDNIH1) protein is Imidazoleglycerol-phosphate dehydratase.